We begin with the raw amino-acid sequence, 463 residues long: Cysteine--tRNA ligase (463 aa).

Cys-30 serves as a coordination point for Zn(2+). The short motif at 32-42 (MTVYDYCHVGH) is the 'HIGH' region element. Positions 214, 239, and 243 each coordinate Zn(2+). The short motif at 271–275 (KMSKS) is the 'KMSKS' region element. Position 274 (Lys-274) interacts with ATP.

This sequence belongs to the class-I aminoacyl-tRNA synthetase family. Monomer. The cofactor is Zn(2+).

The protein localises to the cytoplasm. The enzyme catalyses tRNA(Cys) + L-cysteine + ATP = L-cysteinyl-tRNA(Cys) + AMP + diphosphate. The chain is Cysteine--tRNA ligase from Ralstonia pickettii (strain 12J).